Reading from the N-terminus, the 447-residue chain is BAG family molecular chaperone regulator 5 (447 aa).

BAG domains lie at 9 to 86, 95 to 167, 182 to 260, 275 to 350, and 365 to 442; these read SISR…EQNA, QNIF…EDCM, SVAK…DLEE, SIIK…DLKE, and PHKA…DMKS.

Binds to the ATPase domain of HSP/HSP70 chaperones. Binds PRKN. Interacts with HSPA8. Interacts with JPH2.

Its function is as follows. Co-chaperone for HSP/HSP70 proteins. It functions as a nucleotide-exchange factor promoting the release of ADP from HSP70, thereby activating HSP70-mediated protein refolding. Has an essential role in maintaining proteostasis at junctional membrane complexes (JMC), where it may function as a scaffold between the HSPA8 chaperone and JMC proteins enabling correct, HSPA8-dependent JMC protein folding. Inhibits both auto-ubiquitination of PRKN and ubiquitination of target proteins by PRKN. The polypeptide is BAG family molecular chaperone regulator 5 (Bag5) (Mus musculus (Mouse)).